The following is a 567-amino-acid chain: Microtubule-associated protein 70-1 (567 aa).

The stretch at 38–341 (VRVELTRLEN…AARSEAQLKD (304 aa)) forms a coiled coil. Residues 220-440 (ILDRMHRQKV…SGMNVSTDSS (221 aa)) form a required for targeting to microtubules region. Disordered regions lie at residues 425 to 457 (KGHV…EFTS) and 534 to 567 (LEKE…ARNM). Residues 440–453 (SEDKESNNSDEKAN) are compositionally biased toward basic and acidic residues. Residues 516–545 (KKRRMEVAAMEKEMAALRLEKEQDNKAKRF) adopt a coiled-coil conformation.

Belongs to the MAP70 family.

The protein localises to the cytoplasm. The protein resides in the cytoskeleton. Its function is as follows. Plant-specific protein that interact with microtubules. The sequence is that of Microtubule-associated protein 70-1 (MAP70.1) from Oryza sativa subsp. japonica (Rice).